The chain runs to 452 residues: Bifunctional protein GlmU (452 aa).

The segment at 1–224 (MNIVILAAGM…EWETHGVNSK (224 aa)) is pyrophosphorylase. UDP-N-acetyl-alpha-D-glucosamine is bound by residues 6-9 (LAAG), lysine 20, glutamine 71, 76-77 (GT), 98-100 (YGD), glycine 135, glutamate 149, asparagine 164, and asparagine 222. Position 100 (aspartate 100) interacts with Mg(2+). Asparagine 222 contacts Mg(2+). Residues 225–245 (VQLAELERIHQRNIAHALLEQ) form a linker region. The interval 246 to 452 (GVTLADPARI…NWQRPVKIKK (207 aa)) is N-acetyltransferase. Residues arginine 328 and lysine 346 each coordinate UDP-N-acetyl-alpha-D-glucosamine. Histidine 358 (proton acceptor) is an active-site residue. Positions 361 and 372 each coordinate UDP-N-acetyl-alpha-D-glucosamine. Acetyl-CoA is bound by residues alanine 375, 381–382 (NY), serine 400, alanine 418, and arginine 435.

It in the N-terminal section; belongs to the N-acetylglucosamine-1-phosphate uridyltransferase family. The protein in the C-terminal section; belongs to the transferase hexapeptide repeat family. In terms of assembly, homotrimer. It depends on Mg(2+) as a cofactor.

It is found in the cytoplasm. The enzyme catalyses alpha-D-glucosamine 1-phosphate + acetyl-CoA = N-acetyl-alpha-D-glucosamine 1-phosphate + CoA + H(+). It catalyses the reaction N-acetyl-alpha-D-glucosamine 1-phosphate + UTP + H(+) = UDP-N-acetyl-alpha-D-glucosamine + diphosphate. Its pathway is nucleotide-sugar biosynthesis; UDP-N-acetyl-alpha-D-glucosamine biosynthesis; N-acetyl-alpha-D-glucosamine 1-phosphate from alpha-D-glucosamine 6-phosphate (route II): step 2/2. The protein operates within nucleotide-sugar biosynthesis; UDP-N-acetyl-alpha-D-glucosamine biosynthesis; UDP-N-acetyl-alpha-D-glucosamine from N-acetyl-alpha-D-glucosamine 1-phosphate: step 1/1. It functions in the pathway bacterial outer membrane biogenesis; LPS lipid A biosynthesis. In terms of biological role, catalyzes the last two sequential reactions in the de novo biosynthetic pathway for UDP-N-acetylglucosamine (UDP-GlcNAc). The C-terminal domain catalyzes the transfer of acetyl group from acetyl coenzyme A to glucosamine-1-phosphate (GlcN-1-P) to produce N-acetylglucosamine-1-phosphate (GlcNAc-1-P), which is converted into UDP-GlcNAc by the transfer of uridine 5-monophosphate (from uridine 5-triphosphate), a reaction catalyzed by the N-terminal domain. This Janthinobacterium sp. (strain Marseille) (Minibacterium massiliensis) protein is Bifunctional protein GlmU.